Consider the following 143-residue polypeptide: Nucleoside diphosphate kinase (143 aa).

The ATP site is built by K11, F59, R87, T93, R104, and N114. The active-site Pros-phosphohistidine intermediate is H117.

This sequence belongs to the NDK family. As to quaternary structure, homotetramer. Requires Mg(2+) as cofactor.

Its subcellular location is the cytoplasm. It carries out the reaction a 2'-deoxyribonucleoside 5'-diphosphate + ATP = a 2'-deoxyribonucleoside 5'-triphosphate + ADP. The enzyme catalyses a ribonucleoside 5'-diphosphate + ATP = a ribonucleoside 5'-triphosphate + ADP. In terms of biological role, major role in the synthesis of nucleoside triphosphates other than ATP. The ATP gamma phosphate is transferred to the NDP beta phosphate via a ping-pong mechanism, using a phosphorylated active-site intermediate. The chain is Nucleoside diphosphate kinase from Alcanivorax borkumensis (strain ATCC 700651 / DSM 11573 / NCIMB 13689 / SK2).